The following is a 185-amino-acid chain: UPF0397 protein AYWB_013 (185 aa).

5 consecutive transmembrane segments (helical) span residues 13-33 (IGLS…PVGF), 42-62 (AFLA…VGLI), 69-89 (FFLF…IGFI), 109-129 (IVYF…FFAP), and 148-168 (FLIV…LMTI).

Belongs to the UPF0397 family.

It is found in the cell membrane. The polypeptide is UPF0397 protein AYWB_013 (Aster yellows witches'-broom phytoplasma (strain AYWB)).